A 363-amino-acid polypeptide reads, in one-letter code: Putative lipoate-protein ligase A (363 aa).

Residues Ser-49–Thr-229 form the BPL/LPL catalytic domain. ATP-binding positions include Arg-91, Gly-96–Phe-99, and Lys-152. A (R)-lipoate-binding site is contributed by Lys-152.

Belongs to the LplA family. Monomer.

The protein resides in the cytoplasm. It carries out the reaction L-lysyl-[lipoyl-carrier protein] + (R)-lipoate + ATP = N(6)-[(R)-lipoyl]-L-lysyl-[lipoyl-carrier protein] + AMP + diphosphate + H(+). Its pathway is protein modification; protein lipoylation via exogenous pathway; protein N(6)-(lipoyl)lysine from lipoate: step 1/2. It functions in the pathway protein modification; protein lipoylation via exogenous pathway; protein N(6)-(lipoyl)lysine from lipoate: step 2/2. Functionally, catalyzes both the ATP-dependent activation of exogenously supplied lipoate to lipoyl-AMP and the transfer of the activated lipoyl onto the lipoyl domains of lipoate-dependent enzymes. In Schizosaccharomyces pombe (strain 972 / ATCC 24843) (Fission yeast), this protein is Putative lipoate-protein ligase A (aim22).